A 167-amino-acid chain; its full sequence is Signal peptidase complex subunit 2 (167 aa).

At 1–36 the chain is on the cytoplasmic side; the sequence is MPKYNVSDFKSKFDKELTNHFNKNGYKQSFVFEDIR. Residues 37-57 traverse the membrane as a helical segment; sequence LLIAIACIIPAGLAFGIEYVY. The Lumenal segment spans residues 58–68; it reads GFGVLKSYLKY. Residues 69–89 traverse the membrane as a helical segment; that stretch reads LLPLYFLASCLLTFWSSVVKG. Residues 90 to 167 lie on the Cytoplasmic side of the membrane; that stretch reads STVYVATKKE…ISKYLSQIEN (78 aa).

It belongs to the SPCS2 family. As to quaternary structure, component of the signal peptidase complex (SPC) composed of a catalytic subunit sec11 and three accessory subunits spc1, spc2 and spc3. The complex induces a local thinning of the ER membrane which is used to measure the length of the signal peptide (SP) h-region of protein substrates. This ensures the selectivity of the complex towards h-regions shorter than 18-20 amino acids. SPC associates with the translocon complex.

Its subcellular location is the endoplasmic reticulum membrane. Component of the signal peptidase complex (SPC) which catalyzes the cleavage of N-terminal signal sequences from nascent proteins as they are translocated into the lumen of the endoplasmic reticulum. Enhances the enzymatic activity of SPC and facilitates the interactions between different components of the translocation site. This Schizosaccharomyces pombe (strain 972 / ATCC 24843) (Fission yeast) protein is Signal peptidase complex subunit 2 (spc2).